Consider the following 533-residue polypeptide: CTP synthase (533 aa).

The amidoligase domain stretch occupies residues 1-265 (MTKFIFVTGG…PAYLARRLGL (265 aa)). Ser13 serves as a coordination point for CTP. Ser13 is a UTP binding site. 14–19 (GLGKGI) provides a ligand contact to ATP. An L-glutamine-binding site is contributed by Tyr54. Asp71 contacts ATP. Residues Asp71 and Glu139 each contribute to the Mg(2+) site. CTP contacts are provided by residues 146–148 (DIE), 186–191 (KTKPTQ), and Lys222. UTP contacts are provided by residues 186–191 (KTKPTQ) and Lys222. The Glutamine amidotransferase type-1 domain maps to 290-532 (EIAIVGKYVK…VEAAKKKKYG (243 aa)). Gly351 lines the L-glutamine pocket. The Nucleophile; for glutamine hydrolysis role is filled by Cys378. L-glutamine is bound by residues 379–382 (FGFQ), Glu402, and Arg459. Active-site residues include His505 and Glu507.

This sequence belongs to the CTP synthase family. In terms of assembly, homotetramer.

It catalyses the reaction UTP + L-glutamine + ATP + H2O = CTP + L-glutamate + ADP + phosphate + 2 H(+). The catalysed reaction is L-glutamine + H2O = L-glutamate + NH4(+). It carries out the reaction UTP + NH4(+) + ATP = CTP + ADP + phosphate + 2 H(+). The protein operates within pyrimidine metabolism; CTP biosynthesis via de novo pathway; CTP from UDP: step 2/2. Allosterically activated by GTP, when glutamine is the substrate; GTP has no effect on the reaction when ammonia is the substrate. The allosteric effector GTP functions by stabilizing the protein conformation that binds the tetrahedral intermediate(s) formed during glutamine hydrolysis. Inhibited by the product CTP, via allosteric rather than competitive inhibition. In terms of biological role, catalyzes the ATP-dependent amination of UTP to CTP with either L-glutamine or ammonia as the source of nitrogen. Regulates intracellular CTP levels through interactions with the four ribonucleotide triphosphates. The sequence is that of CTP synthase from Thermococcus kodakarensis (strain ATCC BAA-918 / JCM 12380 / KOD1) (Pyrococcus kodakaraensis (strain KOD1)).